Reading from the N-terminus, the 255-residue chain is Vitamin B12 import ATP-binding protein BtuD (255 aa).

The region spanning 2-240 (MHVKHIALGS…EGLAEVFQTQ (239 aa)) is the ABC transporter domain. 30-37 (GPNGSGKS) contacts ATP.

This sequence belongs to the ABC transporter superfamily. Vitamin B12 importer (TC 3.A.1.13.1) family. As to quaternary structure, the complex is composed of two ATP-binding proteins (BtuD), two transmembrane proteins (BtuC) and a solute-binding protein (BtuF).

Its subcellular location is the cell inner membrane. It carries out the reaction an R-cob(III)alamin(out) + ATP + H2O = an R-cob(III)alamin(in) + ADP + phosphate + H(+). Functionally, part of the ABC transporter complex BtuCDF involved in vitamin B12 import. Responsible for energy coupling to the transport system. The sequence is that of Vitamin B12 import ATP-binding protein BtuD from Vibrio campbellii (strain ATCC BAA-1116).